We begin with the raw amino-acid sequence, 138 residues long: MLMPKRTKFRKQQKGQFAGLSKGATFIDFGEFGMQTLERGWVTSRQIEACRVAINRYLKRKGKVWIRVFPDKSVTKKPAETRMGKGKGAPDHWVAVVRPGRILFEVANVSKEDAQDALRRAAAKLGIRTRFVKRVERV.

Belongs to the universal ribosomal protein uL16 family. Part of the 50S ribosomal subunit.

In terms of biological role, binds 23S rRNA and is also seen to make contacts with the A and possibly P site tRNAs. The polypeptide is Large ribosomal subunit protein uL16 (Chlamydia felis (strain Fe/C-56) (Chlamydophila felis)).